Consider the following 446-residue polypeptide: 3-phosphoshikimate 1-carboxyvinyltransferase (446 aa).

The interval Met1 to Pro20 is disordered. 3 residues coordinate 3-phosphoshikimate: Lys25, Ser26, and Arg30. Lys25 lines the phosphoenolpyruvate pocket. Residues Gly98 and Arg126 each coordinate phosphoenolpyruvate. 4 residues coordinate 3-phosphoshikimate: Ser171, Gln173, Asp324, and Lys351. Gln173 serves as a coordination point for phosphoenolpyruvate. Residue Asp324 is the Proton acceptor of the active site. Phosphoenolpyruvate-binding residues include Arg355 and Arg399.

It belongs to the EPSP synthase family. Monomer.

Its subcellular location is the cytoplasm. It carries out the reaction 3-phosphoshikimate + phosphoenolpyruvate = 5-O-(1-carboxyvinyl)-3-phosphoshikimate + phosphate. Its pathway is metabolic intermediate biosynthesis; chorismate biosynthesis; chorismate from D-erythrose 4-phosphate and phosphoenolpyruvate: step 6/7. Functionally, catalyzes the transfer of the enolpyruvyl moiety of phosphoenolpyruvate (PEP) to the 5-hydroxyl of shikimate-3-phosphate (S3P) to produce enolpyruvyl shikimate-3-phosphate and inorganic phosphate. This is 3-phosphoshikimate 1-carboxyvinyltransferase from Paramagnetospirillum magneticum (strain ATCC 700264 / AMB-1) (Magnetospirillum magneticum).